The following is a 474-amino-acid chain: Bifunctional ribulose 5-phosphate reductase/CDP-ribitol pyrophosphorylase Bcs1 (474 aa).

Residues 1-238 (MNKNKNIGII…DKLFQSRSHF (238 aa)) form a ribitol-5-phosphate cytidylyltransferase region. A ribulose-5-phosphate reductase region spans residues 250 to 474 (YDMKDQVLVV…ITNILADLYK (225 aa)).

It in the N-terminal section; belongs to the IspD/TarI cytidylyltransferase family. This sequence in the C-terminal section; belongs to the short-chain dehydrogenases/reductases (SDR) family. As to quaternary structure, monomer.

It catalyses the reaction D-ribitol 5-phosphate + CTP + H(+) = CDP-L-ribitol + diphosphate. It carries out the reaction D-ribitol 5-phosphate + NADP(+) = D-ribulose 5-phosphate + NADPH + H(+). Its pathway is capsule biogenesis; capsule polysaccharide biosynthesis. Its function is as follows. Catalyzes the NADPH-dependent reduction of D-ribulose 5-phosphate to D-ribitol 5-phosphate and the further reaction of D-ribitol 5-phosphate with CTP to form CDP-ribitol. The sequence is that of Bifunctional ribulose 5-phosphate reductase/CDP-ribitol pyrophosphorylase Bcs1 from Haemophilus influenzae.